The chain runs to 452 residues: Protein henna (452 aa).

One can recognise an ACT domain in the interval 36-107 (FSPKDSSLSS…EQCSYFNIIS (72 aa)). A Phosphoserine; by CaMK2 modification is found at serine 272. Residues histidine 284, histidine 289, and glutamate 329 each coordinate Fe cation.

Belongs to the biopterin-dependent aromatic amino acid hydroxylase family. It depends on Fe(2+) as a cofactor. As to expression, phenylalanine hydrolase activity is found in yolk granules of embryos, and female abdomen and fat body tissues. Tryptophan hydroxylase is expressed in serotonergic neurons. Both enzymes are present in cuticular tissues.

The catalysed reaction is (6R)-L-erythro-5,6,7,8-tetrahydrobiopterin + L-phenylalanine + O2 = (4aS,6R)-4a-hydroxy-L-erythro-5,6,7,8-tetrahydrobiopterin + L-tyrosine. The enzyme catalyses (6R)-L-erythro-5,6,7,8-tetrahydrobiopterin + L-tryptophan + O2 = 5-hydroxy-L-tryptophan + (4aS,6R)-4a-hydroxy-L-erythro-5,6,7,8-tetrahydrobiopterin. It participates in amino-acid degradation; L-phenylalanine degradation; acetoacetate and fumarate from L-phenylalanine: step 1/6. N-terminal region of PAH is thought to contain allosteric binding sites for phenylalanine and to constitute an 'inhibitory' domain that regulates the activity of a catalytic domain in the C-terminal portion of the molecule. In Drosophila melanogaster (Fruit fly), this protein is Protein henna (Hn).